A 311-amino-acid chain; its full sequence is Methionyl-tRNA formyltransferase (311 aa).

110-113 is a binding site for (6S)-5,6,7,8-tetrahydrofolate; that stretch reads SLLP.

It belongs to the Fmt family.

It carries out the reaction L-methionyl-tRNA(fMet) + (6R)-10-formyltetrahydrofolate = N-formyl-L-methionyl-tRNA(fMet) + (6S)-5,6,7,8-tetrahydrofolate + H(+). Its function is as follows. Attaches a formyl group to the free amino group of methionyl-tRNA(fMet). The formyl group appears to play a dual role in the initiator identity of N-formylmethionyl-tRNA by promoting its recognition by IF2 and preventing the misappropriation of this tRNA by the elongation apparatus. The chain is Methionyl-tRNA formyltransferase from Streptococcus thermophilus (strain ATCC BAA-250 / LMG 18311).